Consider the following 232-residue polypeptide: Large ribosomal subunit protein uL1 (232 aa).

The protein belongs to the universal ribosomal protein uL1 family. Part of the 50S ribosomal subunit.

Its function is as follows. Binds directly to 23S rRNA. The L1 stalk is quite mobile in the ribosome, and is involved in E site tRNA release. Functionally, protein L1 is also a translational repressor protein, it controls the translation of the L11 operon by binding to its mRNA. The sequence is that of Large ribosomal subunit protein uL1 from Pelotomaculum thermopropionicum (strain DSM 13744 / JCM 10971 / SI).